A 254-amino-acid chain; its full sequence is Serine acetyltransferase (254 aa).

Belongs to the transferase hexapeptide repeat family.

It is found in the cytoplasm. It catalyses the reaction L-serine + acetyl-CoA = O-acetyl-L-serine + CoA. It participates in amino-acid biosynthesis; L-cysteine biosynthesis; L-cysteine from L-serine: step 1/2. The polypeptide is Serine acetyltransferase (cysE) (Buchnera aphidicola subsp. Baizongia pistaciae (strain Bp)).